A 991-amino-acid polypeptide reads, in one-letter code: Adhesion G-protein coupled receptor F3 (991 aa).

The first 20 residues, Met1–Leu20, serve as a signal peptide directing secretion. The Extracellular segment spans residues Glu21–Gln694. N-linked (GlcNAc...) asparagine glycans are attached at residues Asn75, Asn102, Asn118, Asn321, Asn362, Asn484, Asn571, Asn589, Asn630, and Asn660. The region spanning His519–Pro684 is the GAIN-B domain. 2 disulfide bridges follow: Cys635–Cys666 and Cys654–Cys668. The GPS stretch occupies residues Cys635 to Pro684. The helical transmembrane segment at Val695–Trp715 threads the bilayer. The Cytoplasmic segment spans residues Arg716 to Thr730. A helical transmembrane segment spans residues Leu731–Leu751. The Extracellular portion of the chain corresponds to Pro752–Ser757. The chain crosses the membrane as a helical span at residues Leu758–Met778. The Cytoplasmic portion of the chain corresponds to Leu779–His799. A helical transmembrane segment spans residues Val800–Thr820. Topologically, residues Leu821–Glu850 are extracellular. A helical membrane pass occupies residues Pro851 to Leu871. Topologically, residues Arg872 to Lys892 are cytoplasmic. A helical membrane pass occupies residues Ala893–Phe913. Residues Asp914 to Ser916 lie on the Extracellular side of the membrane. A helical membrane pass occupies residues Ile917–Phe937. The Cytoplasmic portion of the chain corresponds to Gly938–Asp991. Residues Ser964–Asp991 form a disordered region. Residues Thr972–Asp991 are compositionally biased toward basic and acidic residues.

It belongs to the G-protein coupled receptor 2 family. Adhesion G-protein coupled receptor (ADGR) subfamily. In terms of assembly, heterodimer of 2 chains generated by proteolytic processing; the large extracellular N-terminal fragment and the membrane-bound C-terminal fragment predominantly remain associated and non-covalently linked. Autoproteolytically processed at the GPS region of the GAIN-B domain; this cleavage modulates receptor activity. Expression is restricted to testis and circumvallate papillae.

The protein localises to the membrane. Orphan receptor. This chain is Adhesion G-protein coupled receptor F3 (ADGRF3), found in Mus musculus (Mouse).